A 217-amino-acid chain; its full sequence is Somatotropin (217 aa).

Residues 1-26 (MATGSRTSLLLAFGLLCLPWLQEGSA) form the signal peptide. H44 is a binding site for Zn(2+). Residues C79 and C191 are joined by a disulfide bond. S132 is subject to Phosphoserine. Residue Q163 is modified to Deamidated glutamine; by deterioration. S176 is modified (phosphoserine). Residue N178 is modified to Deamidated asparagine; by deterioration. E200 is a binding site for Zn(2+). C208 and C215 form a disulfide bridge.

Belongs to the somatotropin/prolactin family. Monomer, dimer, trimer, tetramer and pentamer, disulfide-linked or non-covalently associated, in homomeric and heteromeric combinations. Can also form a complex either with GHBP or with the alpha2-macroglobulin complex.

The protein resides in the secreted. Plays an important role in growth control. Its major role in stimulating body growth is to stimulate the liver and other tissues to secrete IGF1. It stimulates both the differentiation and proliferation of myoblasts. It also stimulates amino acid uptake and protein synthesis in muscle and other tissues. The polypeptide is Somatotropin (GH1) (Homo sapiens (Human)).